A 989-amino-acid chain; its full sequence is Voltage-gated delayed rectifier potassium channel KCNH1 (989 aa).

Residues 1–220 (MTMAGGRRGL…LHYCVFKTTW (220 aa)) are Cytoplasmic-facing. Positions 14 to 94 (QNTFLENIVR…QTFENYEMNS (81 aa)) constitute a PAS domain. The PAC domain maps to 93–145 (NSFEILMYKKNRTPVWFFVKIAPIRNEQDKVVLFLCTFSDITAFKQPIEDDSC). Positions 151-162 (FARLTRALTSSR) are required for phosphatidylinositol bisphosphate binding. The chain crosses the membrane as a helical span at residues 221 to 241 (DWIILILTFYTAILVPYNVSF). The Extracellular portion of the chain corresponds to 242–248 (KTRQNNV). A helical membrane pass occupies residues 249–269 (AWLVVDSIVDVIFLVDIVLNF). At 270–290 (HTTFVGPAGEVISDPKLIRMN) the chain is on the cytoplasmic side. The helical transmembrane segment at 291–309 (YLKTWFVIDLLSCLPYDVI) threads the bilayer. The Extracellular segment spans residues 310–345 (NAFENVDEVSAFMGDPGKIGFADQIPPPLEGRESQG). A helical; Voltage-sensor transmembrane segment spans residues 346–368 (ISSLFSSLKVVRLLRLGRVARKL). The Cytoplasmic segment spans residues 369-377 (DHYIEYGAA). A helical membrane pass occupies residues 378-399 (VLVLLVCVFGLAAHWMACIWYS). Over 400-448 (IGDYEIFDEDTKTIRNNSWLYQLALDIGTPYQFNGSGSGKWEGGPSKNS) the chain is Extracellular. 2 N-linked (GlcNAc...) asparagine glycosylation sites follow: N415 and N433. Residues 449–470 (VYISSLYFTMTSLTSVGFGNIA) constitute an intramembrane region (pore-forming). The Selectivity filter motif lies at 463 to 468 (SVGFGN). The Extracellular portion of the chain corresponds to 471-477 (PSTDIEK). The chain crosses the membrane as a helical span at residues 478–498 (IFAVAIMMIGSLLYATIFGNV). The Cytoplasmic portion of the chain corresponds to 499 to 989 (TTIFQQMYAN…ESDRDIFGAS (491 aa)). Positions 673–770 (KRDALQKVLE…LDDLDVEKGN (98 aa)) are calmodulin-binding. Residues 699–701 (YNL) are interaction with cyclic nucleotide-binding pocket. Composition is skewed to basic and acidic residues over residues 857-879 (ESMETLPERTKAPGEATLKKTDS) and 887-901 (SDLRLDNVGETRSPQ). 2 disordered regions span residues 857-905 (ESME…DRSP) and 961-989 (RGSAQSPQETGEISRPQSPESDRDIFGAS). The interval 924–964 (ATVLEVKYELKEDIKALNAKMTSIEKQLSEILRILMSRGSA) is CAD (involved in subunit assembly). Residues 962-979 (GSAQSPQETGEISRPQSP) show a composition bias toward polar residues. A phosphoserine mark is found at S974, S978, and S981. A compositionally biased stretch (basic and acidic residues) spans 980–989 (ESDRDIFGAS).

The protein belongs to the potassium channel family. H (Eag) (TC 1.A.1.20) subfamily. Kv10.1/KCNH1 sub-subfamily. As to quaternary structure, homomultimer. The potassium channel is composed of a homo- or heterotetrameric complex of pore-forming alpha subunits that can associate with modulating beta subunits. Heteromultimer with KCNH5/EAG2. Interacts with ALG10B. Interacts with RABEP1. Interacts (via C-terminus) with CTTN. Interacts (via C-terminal cytoplasmic region) with Ca(2+)-bound calmodulin. In terms of processing, channel activity is regulated via tyrosine phosphorylation/dephosphorylation by SRC and PTPN6. In terms of tissue distribution, detected in brain (at protein level). Highly expressed in olfactory bulb. Detected in brain cortex, hippocampus, brain stem, striatum, thalamus, hypothalamus and spinal cord.

It is found in the cell membrane. The protein localises to the nucleus inner membrane. It localises to the cell projection. The protein resides in the dendrite. Its subcellular location is the axon. It is found in the presynaptic cell membrane. The protein localises to the perikaryon. It localises to the postsynaptic density membrane. The protein resides in the early endosome membrane. The enzyme catalyses K(+)(in) = K(+)(out). Its activity is regulated as follows. Channel activity is inhibited by interaction with Ca(2+)-bound calmodulin. Interaction of a single pore-forming alpha subunit with a calmodulin chain is sufficient to promote channel closure. Channel activity is not regulated by cyclic nucleotides. Channel activity is inhibited by binding intracellular phosphatidylinositol-3,5-bisphosphate and phosphatidylinositol-4,5-bisphosphate (PIP2), but is not inhibited by phosphatidylinositol 4-phosphate. In terms of biological role, pore-forming (alpha) subunit of a voltage-gated delayed rectifier potassium channel that mediates outward-rectifying potassium currents which, on depolarization, reaches a steady-state level and do not inactivate. The activation kinetics depend on the prepulse potential and external divalent cation concentration. With negative prepulses, the current activation is delayed and slowed down several fold, whereas more positive prepulses speed up activation. The time course of activation is biphasic with a fast and a slowly activating current component. Activates at more positive membrane potentials and exhibit a steeper activation curve. Channel properties are modulated by subunit assembly. Mediates IK(NI) current in myoblasts. Involved in the regulation of cell proliferation and differentiation, in particular adipogenic and osteogenic differentiation in bone marrow-derived mesenchymal stem cells (MSCs). This is Voltage-gated delayed rectifier potassium channel KCNH1 from Mus musculus (Mouse).